The chain runs to 443 residues: Probable glycine dehydrogenase (decarboxylating) subunit 1 (443 aa).

The protein belongs to the GcvP family. N-terminal subunit subfamily. In terms of assembly, the glycine cleavage system is composed of four proteins: P, T, L and H. In this organism, the P 'protein' is a heterodimer of two subunits.

It carries out the reaction N(6)-[(R)-lipoyl]-L-lysyl-[glycine-cleavage complex H protein] + glycine + H(+) = N(6)-[(R)-S(8)-aminomethyldihydrolipoyl]-L-lysyl-[glycine-cleavage complex H protein] + CO2. The glycine cleavage system catalyzes the degradation of glycine. The P protein binds the alpha-amino group of glycine through its pyridoxal phosphate cofactor; CO(2) is released and the remaining methylamine moiety is then transferred to the lipoamide cofactor of the H protein. This Chloroherpeton thalassium (strain ATCC 35110 / GB-78) protein is Probable glycine dehydrogenase (decarboxylating) subunit 1.